The following is a 108-amino-acid chain: Translation initiation factor 1A (108 aa).

An S1-like domain is found at 11 to 85 (PSRDVPRPEE…NRCDILYKYG (75 aa)).

The protein belongs to the eIF-1A family.

Seems to be required for maximal rate of protein biosynthesis. Enhances ribosome dissociation into subunits and stabilizes the binding of the initiator Met-tRNA(I) to 40 S ribosomal subunits. The protein is Translation initiation factor 1A (eIF1A) of Saccharolobus solfataricus (strain ATCC 35092 / DSM 1617 / JCM 11322 / P2) (Sulfolobus solfataricus).